Consider the following 93-residue polypeptide: MGSRCAKLGTGHGRGHESSMKKLVACVSQDNFSLSSEGEEEEEGEEEEEEEGEEEELPVQGKLLLMEAGQQEEGAEDADSEVQQSPEPKQTRS.

Residues Met1–Ser93 form a disordered region. The segment covering Glu37–Leu57 has biased composition (acidic residues). Residues Glu81–Ser93 show a composition bias toward polar residues. The residue at position 85 (Ser85) is a Phosphoserine.

Belongs to the protamine P3 family.

It localises to the nucleus. The protein resides in the chromosome. Functionally, protamines substitute for histones in the chromatin of sperm during the haploid phase of spermatogenesis. They compact sperm DNA into a highly condensed, stable and inactive complex. In Bos taurus (Bovine), this protein is Protamine-3 (PRM3).